We begin with the raw amino-acid sequence, 199 residues long: Probable cobalt-precorrin-6B C(15)-methyltransferase (decarboxylating) (199 aa).

S-adenosyl-L-methionine-binding positions include Thr24, 48-52 (GCGTG), Asp72, and Ala101.

It belongs to the methyltransferase superfamily. Archaeal-type CbiT family.

It catalyses the reaction Co-precorrin-6B + S-adenosyl-L-methionine = Co-precorrin-7 + S-adenosyl-L-homocysteine + CO2. It participates in cofactor biosynthesis; adenosylcobalamin biosynthesis; cob(II)yrinate a,c-diamide from sirohydrochlorin (anaerobic route): step 8/10. In terms of biological role, catalyzes the methylation of C-15 in cobalt-precorrin-6B followed by the decarboxylation of C-12 to form cobalt-precorrin-7. The protein is Probable cobalt-precorrin-6B C(15)-methyltransferase (decarboxylating) of Saccharolobus solfataricus (strain ATCC 35092 / DSM 1617 / JCM 11322 / P2) (Sulfolobus solfataricus).